Here is a 350-residue protein sequence, read N- to C-terminus: Protein RecA (350 aa).

80-87 is a binding site for ATP; it reads GPESSGKT.

It belongs to the RecA family.

It localises to the cytoplasm. Its function is as follows. Can catalyze the hydrolysis of ATP in the presence of single-stranded DNA, the ATP-dependent uptake of single-stranded DNA by duplex DNA, and the ATP-dependent hybridization of homologous single-stranded DNAs. It interacts with LexA causing its activation and leading to its autocatalytic cleavage. The polypeptide is Protein RecA (Chlorobium limicola (strain DSM 245 / NBRC 103803 / 6330)).